The following is a 117-amino-acid chain: Iron-sulfur cluster insertion protein ErpA (117 aa).

Positions 45, 109, and 111 each coordinate iron-sulfur cluster.

The protein belongs to the HesB/IscA family. As to quaternary structure, homodimer. Requires iron-sulfur cluster as cofactor.

In terms of biological role, required for insertion of 4Fe-4S clusters for at least IspG. The sequence is that of Iron-sulfur cluster insertion protein ErpA from Blochmanniella pennsylvanica (strain BPEN).